The primary structure comprises 598 residues: Elongation factor 4 (598 aa).

Residues 4-185 (KNIRNFSIIA…TIITKIPAPK (182 aa)) enclose the tr-type G domain. GTP is bound by residues 16–21 (DHGKST) and 132–135 (NKID).

Belongs to the TRAFAC class translation factor GTPase superfamily. Classic translation factor GTPase family. LepA subfamily.

The protein resides in the cell inner membrane. It catalyses the reaction GTP + H2O = GDP + phosphate + H(+). Functionally, required for accurate and efficient protein synthesis under certain stress conditions. May act as a fidelity factor of the translation reaction, by catalyzing a one-codon backward translocation of tRNAs on improperly translocated ribosomes. Back-translocation proceeds from a post-translocation (POST) complex to a pre-translocation (PRE) complex, thus giving elongation factor G a second chance to translocate the tRNAs correctly. Binds to ribosomes in a GTP-dependent manner. This is Elongation factor 4 from Campylobacter jejuni subsp. jejuni serotype O:2 (strain ATCC 700819 / NCTC 11168).